We begin with the raw amino-acid sequence, 738 residues long: MEHTYQYAWVIPLLPLPVIMLMGFGLFLIPTATKNLRRIWAFPSILLLSIAMVFSLHLSIQQINGSSIYQYLWSWTINNDFSLEFGYLVDPLTSIMLILITTVGILVLIYSDDYMSHDEGYLRFFVYISFFNTSMLGLVTSSNLIQIYFFWELVGMCSYLLIGFWFTRPIAASACQKAFVTNRVGDFGLLLGILGFFWITGSLEFRDLFKIANNWIPNNGINSLLTTLCAFLLFLGAVAKSAQFPLHVWLPDAMEGPTPISALIHAATMVAAGIFLLARLLPLFISLPLLMSFISLVGTITLFLGATLALAQRDIKRSLAYSTMSQLGYMMLALGIGSYQAALFHLITHAYSKALLFLGSGSVIHSMEPLVGYSPDKSQNMVLMGGLRKYVPITRTTFLCGTLSLCGIPPLACFWSKDEILSNSWLYSPFFGIIASFTAGLTAFYMFRIYLLTFDGYLRVHFQNYSSTKEGSLYSISLWGKSISKGVNRDFVLSTMKSGVSFFSQNIPKIPANTRNKIGSFSTPFGAKKTFVYPHETGNTMLFPLLILLLFTLFIGSIGIPFDNGVKDNRILELTILSKWLTPSINLFQENSNSSINSYEFLTNAISSVSLAIFGLFIAYIFYGSAYSFFQNLNFQNSLVKKNPKKSFLDEVKKKIYSWSYNRGYIDFFYTRVFILGIRRLAELTHFFDKGVIDGIINGVGLAGFCIGEEIKYVGGGRISSYLFFFLCYVSLFLFFIP.

17 helical membrane-spanning segments follow: residues 9–29 (WVIP…LFLI), 39–59 (IWAF…LHLS), 89–109 (VDPL…LVLI), 125–145 (FVYI…SNLI), 147–167 (IYFF…FWFT), 185–205 (GDFG…SLEF), 219–239 (NGIN…GAVA), 258–278 (TPIS…FLLA), 280–300 (LLPL…VGTI), 327–347 (LGYM…FHLI), 354–374 (ALLF…VGYS), 396–416 (TTFL…CFWS), 425–445 (WLYS…TAFY), 542–562 (LFPL…GIPF), 610–630 (SLAI…YSFF), 691–711 (GVID…GEEI), and 717–737 (GRIS…LFFI).

Belongs to the complex I subunit 5 family. As to quaternary structure, NDH is composed of at least 16 different subunits, 5 of which are encoded in the nucleus.

The protein resides in the plastid. Its subcellular location is the chloroplast thylakoid membrane. The enzyme catalyses a plastoquinone + NADH + (n+1) H(+)(in) = a plastoquinol + NAD(+) + n H(+)(out). It carries out the reaction a plastoquinone + NADPH + (n+1) H(+)(in) = a plastoquinol + NADP(+) + n H(+)(out). Functionally, NDH shuttles electrons from NAD(P)H:plastoquinone, via FMN and iron-sulfur (Fe-S) centers, to quinones in the photosynthetic chain and possibly in a chloroplast respiratory chain. The immediate electron acceptor for the enzyme in this species is believed to be plastoquinone. Couples the redox reaction to proton translocation, and thus conserves the redox energy in a proton gradient. The sequence is that of NAD(P)H-quinone oxidoreductase subunit 5, chloroplastic (ndhF) from Saccharum hybrid (Sugarcane).